The sequence spans 98 residues: UPF0473 protein LAR_0522 (98 aa).

Belongs to the UPF0473 family.

This Limosilactobacillus reuteri subsp. reuteri (strain JCM 1112) (Lactobacillus reuteri) protein is UPF0473 protein LAR_0522.